The chain runs to 317 residues: uncharacterized protein (317 aa).

A helical transmembrane segment spans residues Ala11 to Leu31. 3 consecutive PASTA domains span residues Asn33 to Lys100, Gly101 to Lys174, and Asp180 to Lys241.

It localises to the membrane. This is an uncharacterized protein from Borreliella burgdorferi (strain ATCC 35210 / DSM 4680 / CIP 102532 / B31) (Borrelia burgdorferi).